Here is a 207-residue protein sequence, read N- to C-terminus: Ribosomal RNA small subunit methyltransferase G (207 aa).

Residues glycine 75, phenylalanine 80, 126–127, and arginine 140 contribute to the S-adenosyl-L-methionine site; that span reads LE.

Belongs to the methyltransferase superfamily. RNA methyltransferase RsmG family.

The protein resides in the cytoplasm. It carries out the reaction guanosine(527) in 16S rRNA + S-adenosyl-L-methionine = N(7)-methylguanosine(527) in 16S rRNA + S-adenosyl-L-homocysteine. In terms of biological role, specifically methylates the N7 position of guanine in position 527 of 16S rRNA. The polypeptide is Ribosomal RNA small subunit methyltransferase G (Erythrobacter litoralis (strain HTCC2594)).